Reading from the N-terminus, the 314-residue chain is Ribosomal protein uL3 glutamine methyltransferase (314 aa).

The protein belongs to the protein N5-glutamine methyltransferase family. PrmB subfamily.

It catalyses the reaction L-glutaminyl-[ribosomal protein uL3] + S-adenosyl-L-methionine = N(5)-methyl-L-glutaminyl-[ribosomal protein uL3] + S-adenosyl-L-homocysteine + H(+). Functionally, methylates large ribosomal subunit protein uL3 on a specific glutamine residue. This Francisella tularensis subsp. tularensis (strain SCHU S4 / Schu 4) protein is Ribosomal protein uL3 glutamine methyltransferase.